The primary structure comprises 269 residues: Aquaporin-1 (269 aa).

The Cytoplasmic portion of the chain corresponds to 1–11 (MASEFKKKLFW). A helical transmembrane segment spans residues 12–29 (RAVVAEFLAMTLFVFISI). Topologically, residues 30–46 (GSALGFKYPVGNNQTAV) are extracellular. The N-linked (GlcNAc...) asparagine glycan is linked to N42. Residues 47-65 (QDNVKVSLAFGLSIATLAQ) traverse the membrane as a helical segment. Over 66-68 (SVG) the chain is Cytoplasmic. Residues 69 to 82 (HISGAHLNPAVTLG) lie within the membrane without spanning it. Positions 76–78 (NPA) match the NPA 1 motif. The Cytoplasmic segment spans residues 83–90 (LLLSCQIS). Residues 91–109 (IFRALMYIIAQCVGAIVAT) form a helical membrane-spanning segment. Over 110–133 (AILSGITSSLPGNSLGRNDLADGV) the chain is Extracellular. Residues 134-153 (NSGQGLGIEIIGTLQLVLCV) traverse the membrane as a helical segment. Residues 154-163 (LATTDRRRRD) are Cytoplasmic-facing. Residues 164 to 181 (LGGSAPLAIGLSVALGHL) form a helical membrane-spanning segment. Topologically, residues 182-186 (LAIDY) are extracellular. Residues 187–199 (TGCGINPARSFGS) lie within the membrane without spanning it. Positions 192 to 194 (NPA) match the NPA 2 motif. Over 200–206 (AVITHNF) the chain is Extracellular. A glycan (N-linked (GlcNAc...) asparagine) is linked at N205. A helical transmembrane segment spans residues 207–224 (SNHWIFWVGPFIGGALAV). At 225–269 (LIYDFILAPRSSDFTDRVKVWTSGQVEEYDLDADDINSRVEMKPK) the chain is on the cytoplasmic side. S247 bears the Phosphoserine mark. The residue at position 253 (Y253) is a Phosphotyrosine. Position 262 is a phosphoserine (S262).

This sequence belongs to the MIP/aquaporin (TC 1.A.8) family. As to quaternary structure, homotetramer; each monomer provides an independent water pore. Component of the ankyrin-1 complex in the erythrocyte, composed of ANK1, RHCE, RHAG, SLC4A1, EPB42, GYPA, GYPB and AQP1. Interacts with EPHB2; involved in endolymph production in the inner ear. Identified in a complex with STOM. Interacts (via the N-terminal) with ANK1 (via ANK 1-5 repeats). Interacts (via the C-terminal) with EPB42.

It localises to the cell membrane. The catalysed reaction is H2O(in) = H2O(out). It catalyses the reaction nitric oxide(out) = nitric oxide(in). The enzyme catalyses CO2(out) = CO2(in). It carries out the reaction glycerol(in) = glycerol(out). The catalysed reaction is H2O2(out) = H2O2(in). It catalyses the reaction K(+)(in) = K(+)(out). The enzyme catalyses Na(+)(in) = Na(+)(out). Functionally, forms a water channel that facilitates the transport of water across cell membranes, playing a crucial role in water homeostasis in various tissues. Could also be permeable to small solutes including hydrogen peroxide, glycerol and gases such as amonnia (NH3), nitric oxide (NO) and carbon dioxide (CO2). Recruited to the ankyrin-1 complex, a multiprotein complex of the erythrocyte membrane, it could be part of a CO2 metabolon, linking facilitated diffusion of CO2 across the membrane, anion exchange of Cl(-)/HCO3(-) and interconversion of dissolved CO2 and carbonic acid in the cytosol. In vitro, it shows non-selective gated cation channel activity and may be permeable to cations like K(+) and Na(+) in vivo. This Pongo abelii (Sumatran orangutan) protein is Aquaporin-1.